Reading from the N-terminus, the 217-residue chain is Probable transaldolase (217 aa).

K83 (schiff-base intermediate with substrate) is an active-site residue.

It belongs to the transaldolase family. Type 3B subfamily.

The protein localises to the cytoplasm. It catalyses the reaction D-sedoheptulose 7-phosphate + D-glyceraldehyde 3-phosphate = D-erythrose 4-phosphate + beta-D-fructose 6-phosphate. The protein operates within carbohydrate degradation; pentose phosphate pathway; D-glyceraldehyde 3-phosphate and beta-D-fructose 6-phosphate from D-ribose 5-phosphate and D-xylulose 5-phosphate (non-oxidative stage): step 2/3. Transaldolase is important for the balance of metabolites in the pentose-phosphate pathway. The sequence is that of Probable transaldolase from Phenylobacterium zucineum (strain HLK1).